The following is a 335-amino-acid chain: MNQTINLKGRSYLAEKDFSEEEILYLLDLAQKLKEKKAQGIRHRYLEGKNIALLFEKPSTRTRCAFTTACIDLGAHPEYLGKDDIQLGKKESIEDTAKVLGRMFDGIEFRGFEHEKVISLAEHSGVPVWNGLTDLWHPTQMLADFMTVKEHTGRVKGVKLTYIGDGRNNVANSLLIGGAKVGMDVRICSPQELFPDQDIVKMAEAFAEESGGKITVTSDTDKAVSGADVLYTDVWVSMGEEDKFAERIKLLKPYQVNMDLVKKTGNDNVIFLHCLPAFHDLHTTYGQNVYEQHGLKEMEVTDEVFRSKHSKVFDEAENRMHTIKAVMAATLGDLD.

Carbamoyl phosphate contacts are provided by residues 59 to 62 (STRT), Q86, R110, and 137 to 140 (HPTQ). Residues N169, D233, and 237-238 (SM) contribute to the L-ornithine site. Residues 274–275 (CL) and R319 each bind carbamoyl phosphate.

This sequence belongs to the aspartate/ornithine carbamoyltransferase superfamily. OTCase family.

It is found in the cytoplasm. It carries out the reaction carbamoyl phosphate + L-ornithine = L-citrulline + phosphate + H(+). It participates in amino-acid degradation; L-arginine degradation via ADI pathway; carbamoyl phosphate from L-arginine: step 2/2. Reversibly catalyzes the transfer of the carbamoyl group from carbamoyl phosphate (CP) to the N(epsilon) atom of ornithine (ORN) to produce L-citrulline. The chain is Ornithine carbamoyltransferase, catabolic (arcB) from Bacillus licheniformis (strain ATCC 14580 / DSM 13 / JCM 2505 / CCUG 7422 / NBRC 12200 / NCIMB 9375 / NCTC 10341 / NRRL NRS-1264 / Gibson 46).